Consider the following 1250-residue polypeptide: TBC1 domain family member 9B (1250 aa).

2 consecutive GRAM domains span residues 142–209 (LKMR…EKNA) and 288–356 (ECYR…EKAD). The residue at position 397 (threonine 397) is a Phosphothreonine. The segment at 397–443 (TPSKQPGSIGSRKASVVDPSTESSPAPQEGSEQPASPASPLSSRQSF) is disordered. Serine 411, serine 432, serine 435, and serine 463 each carry phosphoserine. The segment covering 414 to 443 (DPSTESSPAPQEGSEQPASPASPLSSRQSF) has biased composition (polar residues). One can recognise a Rab-GAP TBC domain in the interval 508–695 (GIPESLRGEL…VIVDCFFYEG (188 aa)). The chain crosses the membrane as a helical span at residues 668-688 (LSWFLTLFLSVMPFESAVVIV). The 36-residue stretch at 879 to 914 (HTPLLAGRMFRLLDENKDSLINFKEFVTGMSGMYHG) folds into the EF-hand domain. Disordered regions lie at residues 974–999 (LPQEEQEGSGSEERGEEKGTSSPDYR), 1069–1093 (SARTGRKPRDCATEEDEPPAPELHQ), and 1128–1157 (VEGGSGEGQGSPSQLLSDDETKDDMSMSSY). Residues 984 to 999 (SEERGEEKGTSSPDYR) are compositionally biased toward basic and acidic residues. Position 1241 is a phosphoserine (serine 1241).

It localises to the membrane. Its function is as follows. May act as a GTPase-activating protein for Rab family protein(s). This chain is TBC1 domain family member 9B (TBC1D9B), found in Homo sapiens (Human).